The chain runs to 339 residues: MSYSFQGLLNRVNESAIVNTLKEYTGLNTPKWTFNDIPDLTGKVALVTGSSGGIGYVTALELARKGAKVYLAGRNEEKYQKVMKQIHDEVRHSKIRFLRLDLLDFESVYQAAESFIAKEEKLHILVNNAGIMNPPFELTKDGYELQIQTNYLSHYLFTELLLPTLRRTAEECRPGDVRIVHVASIAYLQAPYSGIYFPDLNLPHVLLGTFARYGQSKYAQILYSIALAKRLEKYGIYSVSLHPGVIRTELTRYSPTFALKLLEKSVFQYLLLDPIRGAMTSLYAATSPEISKEHLNGAYFTAIAQRGILHRAHDDAFVEELYRYTHKIFEDLKYLAPSP.

Positions 54, 78, 101, 128, 213, and 217 each coordinate NADP(+). Tyr213 (proton donor) is an active-site residue. The active-site Lowers pKa of active site Tyr is Lys217.

The protein belongs to the short-chain dehydrogenases/reductases (SDR) family.

This is an uncharacterized protein from Schizosaccharomyces pombe (strain 972 / ATCC 24843) (Fission yeast).